A 171-amino-acid chain; its full sequence is 3-hydroxydecanoyl-[acyl-carrier-protein] dehydratase (171 aa).

His70 is an active-site residue.

It belongs to the thioester dehydratase family. FabA subfamily. In terms of assembly, homodimer.

It localises to the cytoplasm. It carries out the reaction a (3R)-hydroxyacyl-[ACP] = a (2E)-enoyl-[ACP] + H2O. The enzyme catalyses (3R)-hydroxydecanoyl-[ACP] = (2E)-decenoyl-[ACP] + H2O. It catalyses the reaction (2E)-decenoyl-[ACP] = (3Z)-decenoyl-[ACP]. It participates in lipid metabolism; fatty acid biosynthesis. Its function is as follows. Necessary for the introduction of cis unsaturation into fatty acids. Catalyzes the dehydration of (3R)-3-hydroxydecanoyl-ACP to E-(2)-decenoyl-ACP and then its isomerization to Z-(3)-decenoyl-ACP. Can catalyze the dehydratase reaction for beta-hydroxyacyl-ACPs with saturated chain lengths up to 16:0, being most active on intermediate chain length. This Shewanella halifaxensis (strain HAW-EB4) protein is 3-hydroxydecanoyl-[acyl-carrier-protein] dehydratase.